The following is a 726-amino-acid chain: Methionine--tRNA ligase (726 aa).

A 'HIGH' region motif is present at residues 12 to 22; that stretch reads PYVNNIPHLGN. Residues cysteine 143, cysteine 146, cysteine 155, and cysteine 158 each coordinate Zn(2+). The 'KMSKS' region motif lies at 330 to 334; sequence KFSKS. Lysine 333 provides a ligand contact to ATP. The tRNA-binding domain maps to 562–667; it reads FSEKVCLKVV…DNPIPGERII (106 aa).

Belongs to the class-I aminoacyl-tRNA synthetase family. MetG type 1 subfamily. Homodimer. Zn(2+) is required as a cofactor.

Its subcellular location is the cytoplasm. The catalysed reaction is tRNA(Met) + L-methionine + ATP = L-methionyl-tRNA(Met) + AMP + diphosphate. Its function is as follows. Is required not only for elongation of protein synthesis but also for the initiation of all mRNA translation through initiator tRNA(fMet) aminoacylation. The protein is Methionine--tRNA ligase of Borrelia turicatae (strain 91E135).